The chain runs to 169 residues: Peptide methionine sulfoxide reductase MsrA (169 aa).

C10 is an active-site residue.

This sequence belongs to the MsrA Met sulfoxide reductase family.

It carries out the reaction L-methionyl-[protein] + [thioredoxin]-disulfide + H2O = L-methionyl-(S)-S-oxide-[protein] + [thioredoxin]-dithiol. The catalysed reaction is [thioredoxin]-disulfide + L-methionine + H2O = L-methionine (S)-S-oxide + [thioredoxin]-dithiol. Has an important function as a repair enzyme for proteins that have been inactivated by oxidation. Catalyzes the reversible oxidation-reduction of methionine sulfoxide in proteins to methionine. In Streptococcus mutans serotype c (strain ATCC 700610 / UA159), this protein is Peptide methionine sulfoxide reductase MsrA.